Reading from the N-terminus, the 172-residue chain is Bifunctional protein PyrR (172 aa).

The PRPP-binding motif lies at 90-102 (LVLVDDVLMSGRT).

It belongs to the purine/pyrimidine phosphoribosyltransferase family. PyrR subfamily.

The catalysed reaction is UMP + diphosphate = 5-phospho-alpha-D-ribose 1-diphosphate + uracil. Functionally, regulates the transcription of the pyrimidine nucleotide (pyr) operon in response to exogenous pyrimidines. Also displays a weak uracil phosphoribosyltransferase activity which is not physiologically significant. The polypeptide is Bifunctional protein PyrR (Pseudomonas entomophila (strain L48)).